The following is a 346-amino-acid chain: Protein RecA (346 aa).

Residue 67–74 (GPESSGKT) participates in ATP binding.

Belongs to the RecA family.

The protein localises to the cytoplasm. Its function is as follows. Can catalyze the hydrolysis of ATP in the presence of single-stranded DNA, the ATP-dependent uptake of single-stranded DNA by duplex DNA, and the ATP-dependent hybridization of homologous single-stranded DNAs. It interacts with LexA causing its activation and leading to its autocatalytic cleavage. In Saccharopolyspora erythraea (strain ATCC 11635 / DSM 40517 / JCM 4748 / NBRC 13426 / NCIMB 8594 / NRRL 2338), this protein is Protein RecA.